The chain runs to 242 residues: ATP synthase subunit a (242 aa).

The next 5 helical transmembrane spans lie at 21–41 (LASVLMVVITAILVFILAIVC), 83–103 (AVTLILFIFVANMLGLPFAIV), 118–137 (ATVTLTLSTTMILLTHYYGI), 175–195 (LYGNIFAGELLLGLLASLFFE), and 198–218 (AWGWIISIPGLIVWQAFSIFV).

It belongs to the ATPase A chain family. In terms of assembly, F-type ATPases have 2 components, CF(1) - the catalytic core - and CF(0) - the membrane proton channel. CF(1) has five subunits: alpha(3), beta(3), gamma(1), delta(1), epsilon(1). CF(0) has three main subunits: a(1), b(2) and c(9-12). The alpha and beta chains form an alternating ring which encloses part of the gamma chain. CF(1) is attached to CF(0) by a central stalk formed by the gamma and epsilon chains, while a peripheral stalk is formed by the delta and b chains.

The protein resides in the cell membrane. In terms of biological role, key component of the proton channel; it plays a direct role in the translocation of protons across the membrane. The chain is ATP synthase subunit a from Staphylococcus epidermidis (strain ATCC 35984 / DSM 28319 / BCRC 17069 / CCUG 31568 / BM 3577 / RP62A).